Reading from the N-terminus, the 109-residue chain is Ig kappa chain V region 3374 (109 aa).

The interval 1 to 24 (ADIVMTQTPASVSAAVGGTVTINC) is framework-1. The interval 25–35 (QASQNIDSWLA) is complementarity-determining-1. The segment at 36–50 (WYQQKPGQPPKVLIY) is framework-2. The complementarity-determining-2 stretch occupies residues 51–57 (RTSTLAS). Residues 58 to 89 (GVPSRFKGSRSGTEFTLTISDLECADAATYYC) form a framework-3 region. The interval 90–98 (QSYYSISSA) is complementarity-determining-3. The framework-4 stretch occupies residues 99 to 108 (FGGGTEVVVK).

The sequence is that of Ig kappa chain V region 3374 from Oryctolagus cuniculus (Rabbit).